The primary structure comprises 450 residues: RUN domain-containing protein 3B (450 aa).

The region spanning 48-180 (DDTSAEFINF…IDFSFCLKGE (133 aa)) is the RUN domain. The interval 203–225 (DSISSDEEEMRTLGSSGSEAGTP) is disordered. Residues 291 to 317 (ISHKLEKEQLEIIILELQDQLTVLKNH) are a coiled coil.

The protein belongs to the RUNDC3 family.

This chain is RUN domain-containing protein 3B (rundc3b), found in Danio rerio (Zebrafish).